A 69-amino-acid chain; its full sequence is Alpha-conotoxin-like Tx1 (69 aa).

An N-terminal signal peptide occupies residues 1-21; sequence MGMRMMFVVFLLVVLASTVVS. Positions 22–49 are excised as a propeptide; the sequence is STSGRRAFHGRNAAAKASGLVSLTDRRP. Intrachain disulfides connect C51/C57 and C52/C65. The segment at 53-55 is ser-Xaa-Pro motif, crucial for potent interaction with nAChR; that stretch reads SDP. The residue at position 66 (G66) is a Glycine amide.

The protein belongs to the conotoxin A superfamily. Expressed by the venom duct.

Its subcellular location is the secreted. In terms of biological role, alpha-conotoxins act on postsynaptic membranes, they bind to the nicotinic acetylcholine receptors (nAChR) and thus inhibit them. The chain is Alpha-conotoxin-like Tx1 from Conus textile (Cloth-of-gold cone).